Here is a 1512-residue protein sequence, read N- to C-terminus: DNA (cytosine-5)-methyltransferase 2 (1512 aa).

Over residues 1 to 22 (METKVGKQKKRSVDSNDDVSKE) the composition is skewed to basic and acidic residues. Disordered regions lie at residues 1 to 35 (METKVGKQKKRSVDSNDDVSKERRPKRAAACRNFK) and 634 to 678 (AIHE…GNSE). The span at 638–662 (VEEEEIEEDEEEDENEEDDIEEEAV) shows a compositional bias: acidic residues. BAH domains follow at residues 707–841 (ETVA…FSLP) and 909–1026 (TTLK…KQFP). In terms of domain architecture, SAM-dependent MTase C5-type spans 1071 to 1505 (LATLDIFAGC…RKLKEALYLK (435 aa)). Cysteine 1176 is an active-site residue.

Belongs to the class I-like SAM-binding methyltransferase superfamily. C5-methyltransferase family. In terms of tissue distribution, expressed at low levels in vegetative and floral organs.

The protein localises to the nucleus. The enzyme catalyses a 2'-deoxycytidine in DNA + S-adenosyl-L-methionine = a 5-methyl-2'-deoxycytidine in DNA + S-adenosyl-L-homocysteine + H(+). In terms of biological role, maintains chromatin CpG methylation that plays a role in genomic imprinting, regulation of embryogenesis and seed viability. Required for proper patterns of CG DNA methylation in dividing cells. The polypeptide is DNA (cytosine-5)-methyltransferase 2 (MET2) (Arabidopsis thaliana (Mouse-ear cress)).